Reading from the N-terminus, the 144-residue chain is Large ribosomal subunit protein uL16 (144 aa).

The protein belongs to the universal ribosomal protein uL16 family. In terms of assembly, part of the 50S ribosomal subunit.

Binds 23S rRNA and is also seen to make contacts with the A and possibly P site tRNAs. The chain is Large ribosomal subunit protein uL16 from Levilactobacillus brevis (strain ATCC 367 / BCRC 12310 / CIP 105137 / JCM 1170 / LMG 11437 / NCIMB 947 / NCTC 947) (Lactobacillus brevis).